We begin with the raw amino-acid sequence, 284 residues long: Phosphoenolpyruvate guanylyltransferase (284 aa).

A disordered region spans residues 94–123 (ADLSADEPAGTDAERRADPSAENRASTSAQ). The span at 105–114 (DAERRADPSA) shows a compositional bias: basic and acidic residues. Residues T203, G219, and S222 each coordinate phosphoenolpyruvate.

Belongs to the CofC family.

It catalyses the reaction phosphoenolpyruvate + GTP + H(+) = enolpyruvoyl-2-diphospho-5'-guanosine + diphosphate. It participates in cofactor biosynthesis; coenzyme F420 biosynthesis. Functionally, guanylyltransferase that catalyzes the activation of phosphoenolpyruvate (PEP) as enolpyruvoyl-2-diphospho-5'-guanosine, via the condensation of PEP with GTP. It is involved in the biosynthesis of coenzyme F420, a hydride carrier cofactor. In Sanguibacter keddieii (strain ATCC 51767 / DSM 10542 / NCFB 3025 / ST-74), this protein is Phosphoenolpyruvate guanylyltransferase.